The sequence spans 556 residues: Formate--tetrahydrofolate ligase (556 aa).

Residue 65–72 coordinates ATP; that stretch reads TPAGEGKS.

This sequence belongs to the formate--tetrahydrofolate ligase family.

The catalysed reaction is (6S)-5,6,7,8-tetrahydrofolate + formate + ATP = (6R)-10-formyltetrahydrofolate + ADP + phosphate. The protein operates within one-carbon metabolism; tetrahydrofolate interconversion. This Streptococcus pneumoniae serotype 19F (strain G54) protein is Formate--tetrahydrofolate ligase.